Here is a 384-residue protein sequence, read N- to C-terminus: 4-hydroxy-3-methylbut-2-en-1-yl diphosphate synthase (flavodoxin) (384 aa).

[4Fe-4S] cluster contacts are provided by Cys-272, Cys-275, Cys-307, and Glu-314.

It belongs to the IspG family. [4Fe-4S] cluster serves as cofactor.

It carries out the reaction (2E)-4-hydroxy-3-methylbut-2-enyl diphosphate + oxidized [flavodoxin] + H2O + 2 H(+) = 2-C-methyl-D-erythritol 2,4-cyclic diphosphate + reduced [flavodoxin]. It functions in the pathway isoprenoid biosynthesis; isopentenyl diphosphate biosynthesis via DXP pathway; isopentenyl diphosphate from 1-deoxy-D-xylulose 5-phosphate: step 5/6. Functionally, converts 2C-methyl-D-erythritol 2,4-cyclodiphosphate (ME-2,4cPP) into 1-hydroxy-2-methyl-2-(E)-butenyl 4-diphosphate. The sequence is that of 4-hydroxy-3-methylbut-2-en-1-yl diphosphate synthase (flavodoxin) from Rhodospirillum rubrum (strain ATCC 11170 / ATH 1.1.1 / DSM 467 / LMG 4362 / NCIMB 8255 / S1).